A 325-amino-acid polypeptide reads, in one-letter code: Hydroxymethylglutaryl-CoA lyase, mitochondrial (325 aa).

Residues 1 to 27 (MASVRKAFPRRLVGLTSLRAVSTSSMG) constitute a mitochondrion transit peptide. The Pyruvate carboxyltransferase domain occupies 33–300 (VKIVEVGPRD…HTGVNLQKLL (268 aa)). Residue arginine 41 coordinates substrate. Aspartate 42 contacts a divalent metal cation. Lysine 48 carries the post-translational modification N6-acetyllysine; alternate. The residue at position 48 (lysine 48) is an N6-succinyllysine; alternate. Lysine 111 carries the post-translational modification N6-acetyllysine. N6-acetyllysine; alternate is present on residues lysine 137 and lysine 179. N6-succinyllysine; alternate occurs at positions 137 and 179. The a divalent metal cation site is built by histidine 233 and histidine 235. The active site involves cysteine 266. Asparagine 275 provides a ligand contact to a divalent metal cation. The short motif at 323 to 325 (CKL) is the Microbody targeting signal element. Position 324 is an N6-acetyllysine (lysine 324).

It belongs to the HMG-CoA lyase family. Homodimer; disulfide-linked. Can also form homotetramers.

The protein resides in the mitochondrion matrix. Its subcellular location is the peroxisome. It catalyses the reaction (3S)-3-hydroxy-3-methylglutaryl-CoA = acetoacetate + acetyl-CoA. It participates in metabolic intermediate metabolism; (S)-3-hydroxy-3-methylglutaryl-CoA degradation; acetoacetate from (S)-3-hydroxy-3-methylglutaryl-CoA: step 1/1. Functionally, mitochondrial 3-hydroxy-3-methylglutaryl-CoA lyase that catalyzes a cation-dependent cleavage of (S)-3-hydroxy-3-methylglutaryl-CoA into acetyl-CoA and acetoacetate, a key step in ketogenesis. Terminal step in leucine catabolism. Ketone bodies (beta-hydroxybutyrate, acetoacetate and acetone) are essential as an alternative source of energy to glucose, as lipid precursors and as regulators of metabolism. This is Hydroxymethylglutaryl-CoA lyase, mitochondrial (Hmgcl) from Mus musculus (Mouse).